Reading from the N-terminus, the 374-residue chain is MATPRTLVPILPPVAALLLLLVAASSIPILAAAQPADACGGAPDQAAADGACHDVPRALRLKLIAIPTILVSSVVGVCLPLLSRSVPALRPDGGLFAVVKAFASGVILATGYMHVLPDAFNNLTSPCLPRKPWSEFPFAAFVAMLAAVSTLMADSLMLTYYNRSKPRPSSGGDVAAVADHGESPDQGHRHGHGHGHGHGMAVAKPDDVEATQVQLRRNRVVVQVLEIGIVVHSVVIGLGMGASQNVCTIRPLVAAMCFHQMFEGMGLGGCILQAEYGRRMRSVLVFFFSTTTPFGIALGLALTRVYRDNSPTALIVVGLLNAASAGLLHYMALVELLAADFMGPKLQGNVRLQLAAFLAVLLGAGGMSVMAKWA.

The signal sequence occupies residues 1–33 (MATPRTLVPILPPVAALLLLLVAASSIPILAAA). Residues 34-62 (QPADACGGAPDQAAADGACHDVPRALRLK) lie on the Extracellular side of the membrane. A helical membrane pass occupies residues 63–83 (LIAIPTILVSSVVGVCLPLLS). The Cytoplasmic portion of the chain corresponds to 84-92 (RSVPALRPD). Residues 93 to 113 (GGLFAVVKAFASGVILATGYM) form a helical membrane-spanning segment. Residues 114–137 (HVLPDAFNNLTSPCLPRKPWSEFP) lie on the Extracellular side of the membrane. Residues 138–158 (FAAFVAMLAAVSTLMADSLML) form a helical membrane-spanning segment. The Cytoplasmic segment spans residues 159–219 (TYYNRSKPRP…ATQVQLRRNR (61 aa)). Residues 166-199 (PRPSSGGDVAAVADHGESPDQGHRHGHGHGHGHG) form a disordered region. A compositionally biased stretch (basic and acidic residues) spans 179–188 (DHGESPDQGH). Residues 220-240 (VVVQVLEIGIVVHSVVIGLGM) traverse the membrane as a helical segment. Over 241 to 251 (GASQNVCTIRP) the chain is Extracellular. Residues 252-272 (LVAAMCFHQMFEGMGLGGCIL) traverse the membrane as a helical segment. The Cytoplasmic portion of the chain corresponds to 273–282 (QAEYGRRMRS). The chain crosses the membrane as a helical span at residues 283 to 303 (VLVFFFSTTTPFGIALGLALT). Residues 304-313 (RVYRDNSPTA) are Extracellular-facing. Residues 314–334 (LIVVGLLNAASAGLLHYMALV) form a helical membrane-spanning segment. Residues 335-353 (ELLAADFMGPKLQGNVRLQ) are Cytoplasmic-facing. The chain crosses the membrane as a helical span at residues 354–374 (LAAFLAVLLGAGGMSVMAKWA).

The protein belongs to the ZIP transporter (TC 2.A.5) family. In terms of tissue distribution, expressed in companion cells in the upper region of the root.

It localises to the cell membrane. Iron transporter involved in the uptake of iron from the rhizosphere across the plasma membrane in the root epidermal layer. May also transport other divalent cations. The polypeptide is Fe(2+) transport protein 1 (IRT1) (Oryza sativa subsp. japonica (Rice)).